The chain runs to 785 residues: Copal-8-ol diphosphate hydratase TPSSA3, chloroplastic (785 aa).

R240 lines the substrate pocket. The Mg(2+) site is built by D372 and D374. The DXDD motif motif lies at 372–375 (DIDD). R459 contributes to the substrate binding site.

Belongs to the terpene synthase family. It depends on Mg(2+) as a cofactor.

The protein localises to the plastid. It is found in the chloroplast. The enzyme catalyses (2E,6E,10E)-geranylgeranyl diphosphate + H2O = 8-hydroxycopalyl diphosphate. Its pathway is secondary metabolite biosynthesis; terpenoid biosynthesis. Involved in the biosynthesis of labdane-type diterpenoid including sclareol, a diterpene-diol that is used as fragrance and flavoring, and has anticancer effects (able to kill leukemic and colon cancer cells by apoptosis). Sclareol can also be used as synthesis precursor of ambergris substitution fragance products such as ambrox. Terpene synthase that produces 8-hydroxycopalyl diphosphate from geranylgeranyl diphosphate (GGPP). In Salvia sclarea (Clary sage), this protein is Copal-8-ol diphosphate hydratase TPSSA3, chloroplastic.